Consider the following 575-residue polypeptide: G2/mitotic-specific cyclin-B3 (575 aa).

A D-box motif is present at residues arginine 75–asparagine 83. Serine 215 is subject to Phosphoserine.

It belongs to the cyclin family. Cyclin AB subfamily. As to quaternary structure, interacts with Cdk1 kinase. Ubiquitinated. Ubiquitination leads to its degradation in early anaphase. In terms of tissue distribution, in embryo, it is expressed in all mitotically proliferating cells, with a high level in neuroblasts. Not expressed in old embryos and thereafter. Not expressed in endoreplicating tissues.

Its subcellular location is the nucleus. Its function is as follows. Cyclins are positive regulatory subunits of the cyclin-dependent kinases (CDKs), and thereby play an essential role in the control of the cell cycle, notably via their destruction during cell division. Probably functions redundantly with other cyclins in regulation of cell cycle. Its presence may be required to delay a deadline for completing cytokinesis that is ordinary imposed by nuclear envelope reformation. Degradation of CycB and CycB3 promote cytokinesis furrow initiation and ingression. Required with CycB for female fertility. The protein is G2/mitotic-specific cyclin-B3 (CycB3) of Drosophila melanogaster (Fruit fly).